The following is a 234-amino-acid chain: Enolase-phosphatase E1 (234 aa).

Mg(2+) contacts are provided by Asp10 and Glu12. Residues 125–126 (SS) and Lys162 each bind substrate. Residue Asp188 coordinates Mg(2+).

The protein belongs to the HAD-like hydrolase superfamily. MasA/MtnC family. As to quaternary structure, monomer. It depends on Mg(2+) as a cofactor.

It localises to the cytoplasm. Its subcellular location is the nucleus. It catalyses the reaction 5-methylsulfanyl-2,3-dioxopentyl phosphate + H2O = 1,2-dihydroxy-5-(methylsulfanyl)pent-1-en-3-one + phosphate. It participates in amino-acid biosynthesis; L-methionine biosynthesis via salvage pathway; L-methionine from S-methyl-5-thio-alpha-D-ribose 1-phosphate: step 3/6. The protein operates within amino-acid biosynthesis; L-methionine biosynthesis via salvage pathway; L-methionine from S-methyl-5-thio-alpha-D-ribose 1-phosphate: step 4/6. Functionally, bifunctional enzyme that catalyzes the enolization of 2,3-diketo-5-methylthiopentyl-1-phosphate (DK-MTP-1-P) into the intermediate 2-hydroxy-3-keto-5-methylthiopentenyl-1-phosphate (HK-MTPenyl-1-P), which is then dephosphorylated to form the acireductone 1,2-dihydroxy-3-keto-5-methylthiopentene (DHK-MTPene). This chain is Enolase-phosphatase E1 (utr4), found in Neurospora crassa (strain ATCC 24698 / 74-OR23-1A / CBS 708.71 / DSM 1257 / FGSC 987).